A 397-amino-acid chain; its full sequence is Methyltransferase/ribosomally synthesized type I borosin cyclic peptide precursor mroMa1 (397 aa).

The methyltransferase domain stretch occupies residues 1 to 246 (MALKKPGSLT…TTSTFYVPPR (246 aa)). Catalysis depends on residues Arg-70, Tyr-74, and Tyr-96. 8 residues coordinate S-adenosyl-L-methionine: Tyr-96, His-98, Val-101, Ala-128, Gln-170, Gly-208, Ser-239, and Thr-240. A clasp domain region spans residues 247–365 (TPAPIDPKAV…GPIFVVMRQL (119 aa)). A precursor leader region spans residues 366–388 (PSAIASGQEPSQEEIARADDATA). An N-methylisoleucine mark is found at Ile-391 and Ile-392. Tyr-393 is subject to N-methyltyrosine. Residue Ile-394 is modified to N-methylisoleucine. Residue Val-395 is modified to N-methylvaline.

The protein in the N-terminal section; belongs to the precorrin methyltransferase family. In terms of assembly, homodimer. Post-translationally, mroMA automethylates at Ile-391, Ile-392, Tyr-393, Ile-394 and Val-395 before being processed by the a prolyloligopeptidase which likely forms a peptidyl ester upon removal of the follower propeptide, which then undergoes macrocyclization with the N-terminus of the modified core peptide. Peptide backbone alpha-N-methylations change the physicochemical properties of amide bonds to provide structural constraints and other favorable characteristics including biological membrane permeability to peptides.

It participates in secondary metabolite biosynthesis. Fusion protein of the methyltransferase mroM1 and a type I borosin core peptide; part of the gene cluster that mediates the biosynthesis of a type I borosin, a highly methylated cyclic peptide with potent biological activities. Type I borosins derive from the C-terminus of the fusion protein, and it is the same protein that methylates its own C-terminus using S-adenosyl methionine (SAM). The C-terminus is subsequently cleaved off and macrocyclized by a prolyloligopeptidase to give the final product. The sequence is that of Methyltransferase/ribosomally synthesized type I borosin cyclic peptide precursor mroMa1 from Mycena rosella (Pink bonnet).